The sequence spans 621 residues: C4-dicarboxylate transport sensor protein DctB (621 aa).

Residues 1 to 26 (MHHVRMVKLPAEASDPHALRSRARRS) lie on the Cytoplasmic side of the membrane. Residues 27–45 (WLVFAAVALVLLAAGLLLA) form a helical membrane-spanning segment. Residues 46–320 (RDYGRSQALA…PLAAGAREAQ (275 aa)) lie on the Periplasmic side of the membrane. The helical transmembrane segment at 321–338 (LLTLAALVPLLALAALLL) threads the bilayer. At 339–621 (RRRQVVAMRS…TTFAVNLKKA (283 aa)) the chain is on the cytoplasmic side. The region spanning 412–621 (GVAHEINQPV…TTFAVNLKKA (210 aa)) is the Histidine kinase domain. Position 415 is a phosphohistidine; by autocatalysis (His-415).

Autophosphorylated.

Its subcellular location is the cell inner membrane. The catalysed reaction is ATP + protein L-histidine = ADP + protein N-phospho-L-histidine.. In terms of biological role, member of the two-component regulatory system DctB/DctD involved in the transport of C4-dicarboxylates. DctB functions as a membrane-associated protein kinase that phosphorylates DctD in response to environmental signals. The chain is C4-dicarboxylate transport sensor protein DctB (dctB) from Rhizobium meliloti (strain 1021) (Ensifer meliloti).